A 755-amino-acid chain; its full sequence is Kojibiose phosphorylase (755 aa).

333-334 (WD) contributes to the substrate binding site. Glu473 functions as the Proton donor in the catalytic mechanism. A substrate-binding site is contributed by 573–574 (KQ).

The protein belongs to the glycosyl hydrolase 65 family.

The catalysed reaction is kojibiose + phosphate = beta-D-glucose 1-phosphate + D-glucose. In terms of biological role, in vitro catalyzes the phosphorolysis of D-kojibiose into beta-D-glucose 1-phosphate and D-glucose. No other disaccharides tested substitute for D-kojibiose. In the reverse direction disaccharides can be formed from beta-D-glucose 1-phosphate plus D-glucose, L-sorbose, D-sorbitol, L-iditol or 1,5-anhydro-D-glucitol, but with low efficiency. The beta-D-glucose 1-phosphate product is the substrate for YcjU (AC P77366), the next apparent enzyme in the putative biochemical pathway encoded in this locus (yjcM to ycjW). In Escherichia coli (strain K12), this protein is Kojibiose phosphorylase (ycjT).